The primary structure comprises 259 residues: Phosphate import ATP-binding protein PstB (259 aa).

The 244-residue stretch at 11 to 254 folds into the ABC transporter domain; sequence AESKNLNFYY…PDNPRTEDYI (244 aa). 43–50 is a binding site for ATP; sequence GPSGCGKS.

The protein belongs to the ABC transporter superfamily. Phosphate importer (TC 3.A.1.7) family. In terms of assembly, the complex is composed of two ATP-binding proteins (PstB), two transmembrane proteins (PstC and PstA) and a solute-binding protein (PstS).

The protein localises to the cell inner membrane. The enzyme catalyses phosphate(out) + ATP + H2O = ADP + 2 phosphate(in) + H(+). Its function is as follows. Part of the ABC transporter complex PstSACB involved in phosphate import. Responsible for energy coupling to the transport system. The chain is Phosphate import ATP-binding protein PstB from Geobacter sulfurreducens (strain ATCC 51573 / DSM 12127 / PCA).